The following is a 642-amino-acid chain: Threonine--tRNA ligase (642 aa).

Residues 1-61 enclose the TGS domain; sequence MPVITLPDGS…ENDTQLSIIT (61 aa). Residues 243-534 are catalytic; the sequence is DHRKIGKQLD…LTEEFAGFFP (292 aa). Lysine 286 is modified (N6-acetyllysine). 3 residues coordinate Zn(2+): cysteine 334, histidine 385, and histidine 511.

The protein belongs to the class-II aminoacyl-tRNA synthetase family. Homodimer. Zn(2+) is required as a cofactor.

The protein resides in the cytoplasm. The catalysed reaction is tRNA(Thr) + L-threonine + ATP = L-threonyl-tRNA(Thr) + AMP + diphosphate + H(+). In terms of biological role, catalyzes the attachment of threonine to tRNA(Thr) in a two-step reaction: L-threonine is first activated by ATP to form Thr-AMP and then transferred to the acceptor end of tRNA(Thr). Also edits incorrectly charged L-seryl-tRNA(Thr). The polypeptide is Threonine--tRNA ligase (Shigella dysenteriae serotype 1 (strain Sd197)).